The chain runs to 297 residues: MIPFSVRVPASTANVGPGFDSVGIALSLYLDVVVKEKADKWQVIHSFEESIPADDKNLIVSTACKVCPSISPHIIEVTSNIPLTRGLGSSASAIVAGIELANQLGNLNLTADQKVQIATNFEGHPDNVAASILGGTVIGALDGKDVSVVRIESKELGVVSLIPNEELNTDESRSVLPKMFPFHEAVKASAISNVLVAALCQKRWEVVGEMMERDHFHEPYRLELVPLLPSIRKCAKEFGAYGTALSGAGPSIFILAPYEKRQEIAGQLARVFTDMKVCELEIDHKGIIVNKEEHIGS.

82 to 92 (PLTRGLGSSAS) contacts ATP.

It belongs to the GHMP kinase family. Homoserine kinase subfamily.

It is found in the cytoplasm. It carries out the reaction L-homoserine + ATP = O-phospho-L-homoserine + ADP + H(+). It participates in amino-acid biosynthesis; L-threonine biosynthesis; L-threonine from L-aspartate: step 4/5. Its function is as follows. Catalyzes the ATP-dependent phosphorylation of L-homoserine to L-homoserine phosphate. This chain is Homoserine kinase, found in Bacillus cereus (strain B4264).